Reading from the N-terminus, the 27-residue chain is Dermaseptin-like peptide (27 aa).

Functionally, has antimicrobial activity against the Gram-positive bacterium M.luteus and the yeast C.albicans. Has hemolytic activity on human and duck erythrocytes. This chain is Dermaseptin-like peptide, found in Schistosoma mansoni (Blood fluke).